The primary structure comprises 425 residues: Transmembrane protein 184A (425 aa).

7 helical membrane-spanning segments follow: residues 51–71 (LFLTSALARGVSGVFVWTALL), 96–116 (LLFIVPIYAFDSWLSLLLLGG), 133–153 (FVIYSFLTLCFQYLGGESAIM), 189–209 (TLQFCIVKPVMALITIILQAF), 226–246 (VTLVYNASVSLALYALFLFYF), 261–281 (FLTIKAIIFLSFWQGMLLAIL), and 303–323 (LAAGYQNFLICIEMLFASLAL). The segment at 375–425 (QYTQQSTHEAPGPGQGGHPSPSTHPGPASGSGGGKKSRNIEKRMLIPSEDL) is disordered. Positions 392–402 (HPSPSTHPGPA) are enriched in low complexity.

The protein belongs to the TMEM184 family. Expressed in vascular cells (at protein level).

The protein localises to the cell membrane. Its subcellular location is the cytoplasm. It localises to the perinuclear region. It is found in the early endosome membrane. The protein resides in the endosome. The protein localises to the cytoplasmic vesicle. Its subcellular location is the secretory vesicle membrane. It localises to the cytoplasmic vesicle membrane. Functionally, acts as a heparin receptor in vascular cells. May be involved in vesicle transport in exocrine cells and Sertoli cells. This Rattus norvegicus (Rat) protein is Transmembrane protein 184A (Tmem184a).